The chain runs to 218 residues: Octanoyltransferase (218 aa).

A BPL/LPL catalytic domain is found at 32-218; it reads GEAAEAIWLL…LRTFPQHFPD (187 aa). Substrate-binding positions include 71–78, 151–153, and 164–166; these read RGGQYTYH, AIG, and GLS. Catalysis depends on C182, which acts as the Acyl-thioester intermediate.

The protein belongs to the LipB family.

The protein resides in the cytoplasm. It catalyses the reaction octanoyl-[ACP] + L-lysyl-[protein] = N(6)-octanoyl-L-lysyl-[protein] + holo-[ACP] + H(+). It participates in protein modification; protein lipoylation via endogenous pathway; protein N(6)-(lipoyl)lysine from octanoyl-[acyl-carrier-protein]: step 1/2. In terms of biological role, catalyzes the transfer of endogenously produced octanoic acid from octanoyl-acyl-carrier-protein onto the lipoyl domains of lipoate-dependent enzymes. Lipoyl-ACP can also act as a substrate although octanoyl-ACP is likely to be the physiological substrate. This chain is Octanoyltransferase, found in Cereibacter sphaeroides (strain ATCC 17029 / ATH 2.4.9) (Rhodobacter sphaeroides).